The sequence spans 280 residues: Probable endonuclease 4 (280 aa).

Zn(2+)-binding residues include histidine 69, histidine 109, glutamate 145, aspartate 179, histidine 182, histidine 216, aspartate 229, histidine 231, and glutamate 261.

The protein belongs to the AP endonuclease 2 family. Zn(2+) serves as cofactor.

It catalyses the reaction Endonucleolytic cleavage to 5'-phosphooligonucleotide end-products.. Its function is as follows. Endonuclease IV plays a role in DNA repair. It cleaves phosphodiester bonds at apurinic or apyrimidinic (AP) sites, generating a 3'-hydroxyl group and a 5'-terminal sugar phosphate. This is Probable endonuclease 4 from Pelodictyon phaeoclathratiforme (strain DSM 5477 / BU-1).